The primary structure comprises 865 residues: Centrosomal protein of 97 kDa (865 aa).

8 LRR repeats span residues aspartate 37–lysine 58, arginine 59–threonine 80, leucine 81–valine 102, histidine 103–threonine 124, alanine 125–valine 146, serine 147–leucine 168, serine 171–alanine 192, and glutamate 196–asparagine 205. The 39-residue stretch at threonine 211–leucine 249 folds into the LRRCT domain. The segment at histidine 300–aspartate 750 is CCP110-binding. A phosphoserine mark is found at serine 308, serine 413, and serine 500. Residues glutamate 506 to isoleucine 529 form a disordered region. The segment covering threonine 508–glutamate 527 has biased composition (basic and acidic residues). Phosphoserine is present on serine 530. Position 542 is a phosphothreonine (threonine 542). The 30-residue stretch at leucine 558 to glutamate 587 folds into the IQ domain. Residues glutamate 587 to valine 865 form an interaction with MPHOSPH9 region. The segment at glutamine 715–asparagine 769 is disordered. The span at threonine 725–aspartate 738 shows a compositional bias: polar residues. The span at arginine 741 to lysine 760 shows a compositional bias: basic and acidic residues. Serine 763 is subject to Phosphoserine.

As to quaternary structure, interacts with CALM1, CEP76, KIF24 and TALPID3. Interacts with CCP110. ENKD1 competes with CEP97 for binding to CCP110, destabilizing the interaction between CP110 and CEP97 which promotes the removal of CCP110 and CEP97 from the mother centriole and allows the initiation of ciliogenesis. Via its interaction with CCP110, may indirectly interact with HERC2 and NEURL4. Interacts with MPHOSPH9.

It is found in the cytoplasm. Its subcellular location is the cytoskeleton. It localises to the microtubule organizing center. The protein localises to the centrosome. The protein resides in the centriole. Functionally, acts as a key negative regulator of ciliogenesis in collaboration with CCP110 by capping the mother centriole thereby preventing cilia formation. Required for recruitment of CCP110 to the centrosome. The sequence is that of Centrosomal protein of 97 kDa (CEP97) from Homo sapiens (Human).